Here is a 550-residue protein sequence, read N- to C-terminus: Cytochrome P450 monooxygenase hasH (550 aa).

A helical membrane pass occupies residues 39-59 (IGVLASIVVLVTVVIGPKAVI). Cys-493 is a heme binding site.

It belongs to the cytochrome P450 family. Heme serves as cofactor.

It is found in the membrane. The protein operates within secondary metabolite biosynthesis. Its function is as follows. Cytochrome P450 monooxygenase; part of the gene cluster that mediates the biosynthesis of hexadehydro-astechrome (HAS), a tryptophan-derived iron(III)-complex that acts as a virulence factor in infected mice. Within the pathway, hasH, with the O-methyltransferase hasC and the FAD-linked oxidoreductase hasG, convert the hasE-prenylated Trp-Ala dipeptide into an O-methylated diketopiperazine that is then released from the hasD NRPS. The HAS biosynthesis begins with the synthesis of a tethered Trp-Ala dipeptide by the NRPS hasD. The 7-dimethylallyltryptophan synthase hasE then catalyzes the prenylation of the hasD-tethered tryptophan or the resulting tethered Trp-Ala dipeptide at the C-7 position of the indole moiety. HAS biosynthesis continues via tethered intermediates with the succesive action of the cytochrome P450 monooxygenase hasH, the O-methyltransferase hasC, and the FAD-linked oxidoreductase hasG. The resulting O-methylated diketopiperazine is then released from hasD. Finally, three O-methylated diketopiperazine molecules assemble in a trimeric complex with Fe(III) to produce hexadehydro-astechrome. This is Cytochrome P450 monooxygenase hasH from Aspergillus fumigatus (strain CBS 144.89 / FGSC A1163 / CEA10) (Neosartorya fumigata).